A 330-amino-acid chain; its full sequence is Dof zinc finger protein DOF2.4 (330 aa).

Residues 14–25 are compositionally biased toward polar residues; that stretch reads NWQQAPPSNYNH. Positions 14–70 are disordered; that stretch reads NWQQAPPSNYNHDGTGASANGGHVLRPQLQPQQQPQQQPHPNGSGGGGGGGGGSIRA. Low complexity predominate over residues 40–55; it reads PQLQPQQQPQQQPHPN. A compositionally biased stretch (gly residues) spans 56 to 68; that stretch reads GSGGGGGGGGGSI. Residues 89–143 form a Dof-type zinc finger; that stretch reads LKCPRCESTNTKFCYFNNYSLTQPRHFCKTCRRYWTRGGALRNVPVGGGCRRNRR. 4 residues coordinate Zn(2+): cysteine 91, cysteine 94, cysteine 116, and cysteine 119. Disordered stretches follow at residues 133–165 and 255–276; these read PVGGGCRRNRRTKSNSNNNNNSTATSNNTSFSS and QQSSMGGGNLEDSSNPNPSANG. A compositionally biased stretch (low complexity) spans 146-165; that stretch reads SNSNNNNNSTATSNNTSFSS. Polar residues predominate over residues 265 to 276; it reads EDSSNPNPSANG.

Specific to the vascular tissues. The PEAR proteins (e.g. DOF2.4, DOF5.1, DOF3.2, DOF1.1, DOF5.6 and DOF5.3) form a short-range concentration gradient that peaks at protophloem sieve elements (PSE).

It is found in the nucleus. Its subcellular location is the symplast. In terms of biological role, transcription factor that binds specifically to a 5'-AA[AG]G-3' consensus core sequence. Probably involved in early processes for vascular development. The PEAR proteins (e.g. DOF2.4, DOF5.1, DOF3.2, DOF1.1, DOF5.6 and DOF5.3) activate gene expression that promotes radial growth of protophloem sieve elements. Triggers the transcription of HD-ZIP III genes, especially in the central domain of vascular tissue. In Arabidopsis thaliana (Mouse-ear cress), this protein is Dof zinc finger protein DOF2.4.